We begin with the raw amino-acid sequence, 96 residues long: Co-chaperonin GroES (96 aa).

Belongs to the GroES chaperonin family. As to quaternary structure, heptamer of 7 subunits arranged in a ring. Interacts with the chaperonin GroEL.

It is found in the cytoplasm. In terms of biological role, together with the chaperonin GroEL, plays an essential role in assisting protein folding. The GroEL-GroES system forms a nano-cage that allows encapsulation of the non-native substrate proteins and provides a physical environment optimized to promote and accelerate protein folding. GroES binds to the apical surface of the GroEL ring, thereby capping the opening of the GroEL channel. The sequence is that of Co-chaperonin GroES from Haemophilus influenzae (strain ATCC 51907 / DSM 11121 / KW20 / Rd).